The chain runs to 173 residues: Protein GrpE (173 aa).

Residues 1–28 are compositionally biased toward basic and acidic residues; sequence MTEEEKTKSEAEEIEQNNKEEEQEKSVE. The interval 1–30 is disordered; that stretch reads MTEEEKTKSEAEEIEQNNKEEEQEKSVEEL.

It belongs to the GrpE family. As to quaternary structure, homodimer.

The protein resides in the cytoplasm. Participates actively in the response to hyperosmotic and heat shock by preventing the aggregation of stress-denatured proteins, in association with DnaK and GrpE. It is the nucleotide exchange factor for DnaK and may function as a thermosensor. Unfolded proteins bind initially to DnaJ; upon interaction with the DnaJ-bound protein, DnaK hydrolyzes its bound ATP, resulting in the formation of a stable complex. GrpE releases ADP from DnaK; ATP binding to DnaK triggers the release of the substrate protein, thus completing the reaction cycle. Several rounds of ATP-dependent interactions between DnaJ, DnaK and GrpE are required for fully efficient folding. This Methanosphaera stadtmanae (strain ATCC 43021 / DSM 3091 / JCM 11832 / MCB-3) protein is Protein GrpE.